Here is a 379-residue protein sequence, read N- to C-terminus: Alcohol dehydrogenase class-P (379 aa).

Serine 2 bears the N-acetylserine mark. Cysteine 47 contacts Zn(2+). Position 49 (threonine 49) interacts with an alcohol. Threonine 49 lines the NAD(+) pocket. Zn(2+) is bound by residues aspartate 50, histidine 69, glutamate 70, cysteine 99, cysteine 102, cysteine 105, cysteine 113, and cysteine 177. An alcohol is bound at residue histidine 69. Positions 206 and 226 each coordinate NAD(+). Serine 229 carries the post-translational modification Phosphoserine. Residues arginine 231, threonine 272, valine 295, valine 297, threonine 320, phenylalanine 322, and arginine 372 each coordinate NAD(+).

This sequence belongs to the zinc-containing alcohol dehydrogenase family. Class-P subfamily. Homodimer. It depends on Zn(2+) as a cofactor. Glutathionylated. As to expression, root specific. Also detected in etiolated seedlings and leaves in cold conditions.

It is found in the cytoplasm. It catalyses the reaction a primary alcohol + NAD(+) = an aldehyde + NADH + H(+). The catalysed reaction is a secondary alcohol + NAD(+) = a ketone + NADH + H(+). The enzyme catalyses ethanol + NAD(+) = acetaldehyde + NADH + H(+). Alcohol dehydrogenase activity show inverse correlation with the decreasing availability of oxygen. Slightly repressed by thiol-modifying agents N-ethylmaleimide (NEM) and 5,5-dithio-bis-(2-nitrobenzoic acid) (DTNB), as well as by methyl methanethiosulfonate (MMTS) in a dose-dependent manner. Inhibited by hydrogen peroxide H(2)O(2). Functionally, alcohol dehydrogenase catalyzing the reduction of toxic aldehydes to the corresponding alcohols. Mostly active on ethanol (EtOH), but exhibits broad substrate selectivity for primary and secondary alcohols (e.g. cinnamyl alcohol, octanol, geraniol, butanol, propyl alcohol, pentanol, isopentanol, ethylene glycol, isopropanol, methanol and tertiary butyl alcohol). Also catalyzes the reverse reaction to convert allyl alcohol to highly toxic acryl-aldehyde. Required for survival and acclimation in hypoxic conditions, especially in roots. Not able to catalyze NADH-dependent degradation of S-nitrosoglutathione (GSNO). In Arabidopsis thaliana (Mouse-ear cress), this protein is Alcohol dehydrogenase class-P.